The sequence spans 909 residues: WD repeat-containing protein 20 homolog (909 aa).

The interval 58-132 (SPAQGKLGSD…SAGNNTVEAR (75 aa)) is disordered. Low complexity-rich tracts occupy residues 80 to 107 (GANT…AISN) and 115 to 127 (SHSN…AGNN). WD repeat units follow at residues 248 to 288 (IDKT…AATA), 321 to 362 (TDNC…GIAR), 363 to 402 (SYFG…VVAR), and 470 to 517 (ADRN…LRHP). Disordered stretches follow at residues 458–483 (FEGF…FRSD), 554–628 (SGQA…AGSV), 661–699 (SDSI…NSGS), 720–739 (SEKK…RQHR), and 749–775 (NQHN…GHSS). Composition is skewed to polar residues over residues 555–569 (GQAT…SCSP) and 595–606 (TANCTISSQSSP). Composition is skewed to low complexity over residues 612-628 (EAAT…AGSV) and 673-699 (GQRP…NSGS). Residues 856–893 (IAHERLTALIFREDCFLTACQDGFIYTWARPGHATHAT) form a WD 5 repeat.

As to quaternary structure, component of the Usp12-46 deubiquitylase complex consisting of Usp12-46, Wdr20 and Uaf1; regulatory subunit that, together with Uaf1, stabilizes Usp12-46. The Usp12-46 deubiquitylase complex associates with arr/arrow; the interaction leads to deubiquitination and stabilization of arr/arrow.

Regulatory component of the Usp12-46 deubiquitylase complex. This complex deubiquitylates the wg/wingless-signaling receptor arr/arrow, which stabilizes the receptor and increases its concentration at the cell surface; this enhances the sensitivity of cells to wg/wingless-signal stimulation. This increases the amplitude and spatial range of the signaling response to the wg/wingless morphogen gradient, facilitating the precise concentration-dependent regulation of its target genes. Required for wg/wingless-mediated signaling in the wing imaginal disc and for wg/wingless-dependent regulation of intestinal stem cell proliferation. This chain is WD repeat-containing protein 20 homolog, found in Drosophila melanogaster (Fruit fly).